Consider the following 164-residue polypeptide: Cyclic pyranopterin monophosphate synthase (164 aa).

Substrate contacts are provided by residues 77-79 and 115-116; these read LCH and ME. Residue aspartate 130 is part of the active site.

The protein belongs to the MoaC family. As to quaternary structure, homohexamer; trimer of dimers.

It catalyses the reaction (8S)-3',8-cyclo-7,8-dihydroguanosine 5'-triphosphate = cyclic pyranopterin phosphate + diphosphate. It participates in cofactor biosynthesis; molybdopterin biosynthesis. In terms of biological role, catalyzes the conversion of (8S)-3',8-cyclo-7,8-dihydroguanosine 5'-triphosphate to cyclic pyranopterin monophosphate (cPMP). The protein is Cyclic pyranopterin monophosphate synthase of Rhizobium meliloti (strain 1021) (Ensifer meliloti).